Here is a 548-residue protein sequence, read N- to C-terminus: Chaperonin GroEL (548 aa).

Residues 30–33, Lys51, 87–91, Gly415, 479–481, and Asp495 contribute to the ATP site; these read TLGP, DGTTT, and NAA. The segment at 525–548 is disordered; that stretch reads PKEDKTSDASSSPAGGMGGMGGMM. The segment covering 539–548 has biased composition (gly residues); that stretch reads GGMGGMGGMM.

It belongs to the chaperonin (HSP60) family. As to quaternary structure, forms a cylinder of 14 subunits composed of two heptameric rings stacked back-to-back. Interacts with the co-chaperonin GroES.

It localises to the cytoplasm. It catalyses the reaction ATP + H2O + a folded polypeptide = ADP + phosphate + an unfolded polypeptide.. Its function is as follows. Together with its co-chaperonin GroES, plays an essential role in assisting protein folding. The GroEL-GroES system forms a nano-cage that allows encapsulation of the non-native substrate proteins and provides a physical environment optimized to promote and accelerate protein folding. This Buchnera aphidicola subsp. Rhopalosiphum padi protein is Chaperonin GroEL.